The sequence spans 146 residues: Angiogenin (146 aa).

The first 24 residues, 1 to 24 (MAMSLCPLLLVFVLGLGLTPPSLA), serve as a signal peptide directing secretion. Glutamine 25 bears the Pyrrolidone carboxylic acid mark. Residue histidine 37 is the Proton acceptor of the active site. Arginine 45 is a tRNA binding site. 3 disulfide bridges follow: cysteine 50–cysteine 105, cysteine 63–cysteine 116, and cysteine 81–cysteine 131. Residues 55–59 (VRRHL) carry the Nucleolar localization signal motif. TRNA contacts are provided by cysteine 105 and isoleucine 127. Residue histidine 138 is the Proton donor of the active site.

This sequence belongs to the pancreatic ribonuclease family. In terms of assembly, homodimer. Interacts with RNH1; inhibiting ANG ribonuclease activity. Interacts with PCNA.

The protein resides in the secreted. It is found in the nucleus. The protein localises to the nucleolus. It localises to the cytoplasm. Its subcellular location is the stress granule. Its activity is regulated as follows. Has weak tRNA ribonuclease activity by itself due to partial autoinhibition by its C-terminus, which folds into a short alpha-helix that partially occludes the substrate-binding site. In absence of stress, the ribonuclease activity is inhibited by RNH1 in the cytoplasm. In response to stress, dissociates from RNH1 in the cytoplasm and associates with cytoplasmic ribosomes with vacant A-sites: ribosomes directly activate the tRNA ribonuclease activity of ANG by refolding the C-terminal alpha-helix. In response to stress, the angiogenic activity of ANG is inhibited by RNH1 in the nucleus. Its function is as follows. Secreted ribonuclease that can either promote or restrict cell proliferation of target cells, depending on the context. Endocytosed in target cells via its receptor PLXNB2 and translocates to the cytoplasm or nucleus. Under stress conditions, localizes to the cytoplasm and promotes the assembly of stress granules (SGs): specifically cleaves a subset of tRNAs within anticodon loops to produce tRNA-derived stress-induced fragments (tiRNAs), resulting in translation repression and inhibition of cell proliferation. tiRNas also prevent formation of apoptosome, thereby promoting cell survival. Preferentially cleaves RNAs between a pyrimidine and an adenosine residue, suggesting that it cleaves the anticodon loop of tRNA(Ala) (32-UUAGCAU-38) after positions 33 and 36. Cleaves a subset of tRNAs, including tRNA(Ala), tRNA(Glu), tRNA(Gly), tRNA(Lys), tRNA(Val), tRNA(His), tRNA(Asp) and tRNA(Sec). Under growth conditions and in differentiated cells, translocates to the nucleus and stimulates ribosomal RNA (rRNA) transcription, including that containing the initiation site sequences of 45S rRNA, thereby promoting cell growth and proliferation. Angiogenin induces vascularization of normal and malignant tissues via its ability to promote rRNA transcription. Involved in hematopoietic stem and progenitor cell (HSPC) growth and survival by promoting rRNA transcription in growth conditions and inhibiting translation in response to stress, respectively. Mediates the crosstalk between myeloid and intestinal epithelial cells to protect the intestinal epithelial barrier integrity: secreted by myeloid cells and promotes intestinal epithelial cells proliferation and survival. Also mediates osteoclast-endothelial cell crosstalk in growing bone: produced by osteoclasts and protects the neighboring vascular cells against senescence by promoting rRNA transcription. The sequence is that of Angiogenin (ANG) from Equus caballus (Horse).